Reading from the N-terminus, the 444-residue chain is Acyl-CoA (8-3)-desaturase (444 aa).

Met-1 is modified (N-acetylmethionine). Residues Met-1–Arg-121 are Cytoplasmic-facing. The Cytochrome b5 heme-binding domain occupies Pro-17 to Ser-94. Residues Met-122–Leu-142 form a helical membrane-spanning segment. The Lumenal portion of the chain corresponds to Asp-143–Ala-145. The helical transmembrane segment at Ala-146–Val-170 threads the bilayer. The Cytoplasmic segment spans residues Gln-171–Phe-267. Residues His-179–His-183 carry the Histidine box-1 motif. Residues His-216–His-220 carry the Histidine box-2 motif. Residues Leu-268–Ile-288 traverse the membrane as a helical segment. Topologically, residues Gln-289–Arg-305 are lumenal. The helical transmembrane segment at Phe-306–Val-326 threads the bilayer. Residues Arg-327–Gln-444 lie on the Cytoplasmic side of the membrane. The Histidine box-3 signature appears at Gln-382 to His-386.

It belongs to the fatty acid desaturase type 1 family. Widely expressed, with highest levels in liver, brain, adrenal gland and heart. Highly expressed in fetal liver and brain.

Its subcellular location is the endoplasmic reticulum membrane. The protein localises to the mitochondrion. The catalysed reaction is (8Z,11Z,14Z)-eicosatrienoyl-CoA + 2 Fe(II)-[cytochrome b5] + O2 + 2 H(+) = (5Z,8Z,11Z,14Z)-eicosatetraenoyl-CoA + 2 Fe(III)-[cytochrome b5] + 2 H2O. It catalyses the reaction (8Z,11Z,14Z,17Z)-eicosatetraenoyl-CoA + 2 Fe(II)-[cytochrome b5] + O2 + 2 H(+) = (5Z,8Z,11Z,14Z,17Z)-eicosapentaenoyl-CoA + 2 Fe(III)-[cytochrome b5] + 2 H2O. It carries out the reaction (11E)-octadecenoyl-CoA + 2 Fe(II)-[cytochrome b5] + O2 + 2 H(+) = (5Z,11E)-octadecadienoyl-CoA + 2 Fe(III)-[cytochrome b5] + 2 H2O. It participates in lipid metabolism; polyunsaturated fatty acid biosynthesis. In terms of biological role, acts as a front-end fatty acyl-coenzyme A (CoA) desaturase that introduces a cis double bond at carbon 5 located between a preexisting double bond and the carboxyl end of the fatty acyl chain. Involved in biosynthesis of highly unsaturated fatty acids (HUFA) from the essential polyunsaturated fatty acids (PUFA) linoleic acid (LA) (18:2n-6) and alpha-linolenic acid (ALA) (18:3n-3) precursors. Specifically, desaturates dihomo-gamma-linoleoate (DGLA) (20:3n-6) and eicosatetraenoate (ETA) (20:4n-3) to generate arachidonate (AA) (20:4n-6) and eicosapentaenoate (EPA) (20:5n-3), respectively. As a rate limiting enzyme for DGLA (20:3n-6) and AA (20:4n-6)-derived eicosanoid biosynthesis, controls the metabolism of inflammatory lipids like prostaglandin E2, critical for efficient acute inflammatory response and maintenance of epithelium homeostasis. Contributes to membrane phospholipid biosynthesis by providing AA (20:4n-6) as a major acyl chain esterified into phospholipids. In particular, regulates phosphatidylinositol-4,5-bisphosphate levels, modulating inflammatory cytokine production in T-cells. Also desaturates (11E)-octadecenoate (trans-vaccenoate)(18:1n-9), a metabolite in the biohydrogenation pathway of LA (18:2n-6). Functionally, does not exhibit any catalytic activity toward 20:3n-6, but it may enhance FADS2 activity. This chain is Acyl-CoA (8-3)-desaturase, found in Homo sapiens (Human).